A 211-amino-acid chain; its full sequence is Dephospho-CoA kinase (211 aa).

The DPCK domain maps to 2–204 (IIGLTGSIGM…SGVRRWRRGK (203 aa)). Residue 10–15 (GMGKST) participates in ATP binding.

This sequence belongs to the CoaE family.

The protein localises to the cytoplasm. It carries out the reaction 3'-dephospho-CoA + ATP = ADP + CoA + H(+). Its pathway is cofactor biosynthesis; coenzyme A biosynthesis; CoA from (R)-pantothenate: step 5/5. Its function is as follows. Catalyzes the phosphorylation of the 3'-hydroxyl group of dephosphocoenzyme A to form coenzyme A. This is Dephospho-CoA kinase from Rhodospirillum rubrum (strain ATCC 11170 / ATH 1.1.1 / DSM 467 / LMG 4362 / NCIMB 8255 / S1).